We begin with the raw amino-acid sequence, 110 residues long: Endoribonuclease SymE (110 aa).

The SpoVT-AbrB domain occupies 29 to 74; the sequence is SSYPEYTRIPAITLKGQWLEDAGFTTGTQVDVRVMNGCIVLTAQQP.

This sequence belongs to the SymE family.

The protein resides in the cytoplasm. Its function is as follows. Involved in the degradation and recycling of damaged RNA. It is itself a target for degradation by the ATP-dependent protease Lon. The sequence is that of Endoribonuclease SymE from Salmonella choleraesuis (strain SC-B67).